Reading from the N-terminus, the 308-residue chain is MKVKVRSYFTISVEDRTKRLHNTLSAEYIYLIQGLLTQGQSYKAPYSGYTVAFTPPSNMYFVFLSNGVVVARFPAKLLSYNENINTVNASQCQNNLTSCNLNNLLFSLEYSSTDETNDTYTFDEVQLWADNEYMIAYASVGTTTKNVNTFVRVTWDAIVTIESDNVLYIPGCTDFSLMLNLQLQLNNYQPYLCLNLPYIIVALTLVPYSLVPQNTFLYTQLSTLLKILNISSTQQLQLQGVQYYVVGNTVYPISQPYIIINTQQPNTITLFLLYGINNNYFIYTTSLSVTIQYFKLYIPTLTINMVEQ.

The helical transmembrane segment at 191–211 (YLCLNLPYIIVALTLVPYSLV) threads the bilayer.

Its subcellular location is the host membrane. This is an uncharacterized protein from Saccharolobus islandicus (Sulfolobus islandicus).